A 97-amino-acid polypeptide reads, in one-letter code: Large ribosomal subunit protein bL25 (97 aa).

The protein belongs to the bacterial ribosomal protein bL25 family. As to quaternary structure, part of the 50S ribosomal subunit; part of the 5S rRNA/L5/L18/L25 subcomplex. Contacts the 5S rRNA. Binds to the 5S rRNA independently of L5 and L18.

Functionally, this is one of the proteins that binds to the 5S RNA in the ribosome where it forms part of the central protuberance. In Buchnera aphidicola subsp. Baizongia pistaciae (strain Bp), this protein is Large ribosomal subunit protein bL25.